The following is a 557-amino-acid chain: Dihydroxy-acid dehydratase (557 aa).

Residue aspartate 78 coordinates Mg(2+). Cysteine 119 is a [2Fe-2S] cluster binding site. Mg(2+)-binding residues include aspartate 120 and lysine 121. An N6-carboxylysine modification is found at lysine 121. Cysteine 192 lines the [2Fe-2S] cluster pocket. Glutamate 442 provides a ligand contact to Mg(2+). The active-site Proton acceptor is serine 468.

It belongs to the IlvD/Edd family. In terms of assembly, homodimer. It depends on [2Fe-2S] cluster as a cofactor. Mg(2+) is required as a cofactor.

The catalysed reaction is (2R)-2,3-dihydroxy-3-methylbutanoate = 3-methyl-2-oxobutanoate + H2O. It carries out the reaction (2R,3R)-2,3-dihydroxy-3-methylpentanoate = (S)-3-methyl-2-oxopentanoate + H2O. It participates in amino-acid biosynthesis; L-isoleucine biosynthesis; L-isoleucine from 2-oxobutanoate: step 3/4. It functions in the pathway amino-acid biosynthesis; L-valine biosynthesis; L-valine from pyruvate: step 3/4. Functions in the biosynthesis of branched-chain amino acids. Catalyzes the dehydration of (2R,3R)-2,3-dihydroxy-3-methylpentanoate (2,3-dihydroxy-3-methylvalerate) into 2-oxo-3-methylpentanoate (2-oxo-3-methylvalerate) and of (2R)-2,3-dihydroxy-3-methylbutanoate (2,3-dihydroxyisovalerate) into 2-oxo-3-methylbutanoate (2-oxoisovalerate), the penultimate precursor to L-isoleucine and L-valine, respectively. The sequence is that of Dihydroxy-acid dehydratase from Bacillus cereus (strain AH187).